We begin with the raw amino-acid sequence, 120 residues long: Large ribosomal subunit protein uL18 (120 aa).

The protein belongs to the universal ribosomal protein uL18 family. Part of the 50S ribosomal subunit; part of the 5S rRNA/L5/L18/L25 subcomplex. Contacts the 5S and 23S rRNAs.

In terms of biological role, this is one of the proteins that bind and probably mediate the attachment of the 5S RNA into the large ribosomal subunit, where it forms part of the central protuberance. The protein is Large ribosomal subunit protein uL18 of Picosynechococcus sp. (strain ATCC 27264 / PCC 7002 / PR-6) (Agmenellum quadruplicatum).